A 304-amino-acid polypeptide reads, in one-letter code: Ribonuclease Z (304 aa).

7 residues coordinate Zn(2+): His-63, His-65, Asp-67, His-68, His-141, Asp-208, and His-266. Asp-67 acts as the Proton acceptor in catalysis.

Belongs to the RNase Z family. In terms of assembly, homodimer. It depends on Zn(2+) as a cofactor.

It carries out the reaction Endonucleolytic cleavage of RNA, removing extra 3' nucleotides from tRNA precursor, generating 3' termini of tRNAs. A 3'-hydroxy group is left at the tRNA terminus and a 5'-phosphoryl group is left at the trailer molecule.. In terms of biological role, zinc phosphodiesterase, which displays some tRNA 3'-processing endonuclease activity. Probably involved in tRNA maturation, by removing a 3'-trailer from precursor tRNA. This is Ribonuclease Z from Chlamydia trachomatis serovar D (strain ATCC VR-885 / DSM 19411 / UW-3/Cx).